The sequence spans 281 residues: Putative dehydrogenase/reductase SDR family member 4-like 1 (281 aa).

36-60 (LVTASTDWIGFAVAQRLAQDGAHVV) provides a ligand contact to NADP(+). Ser172 is a substrate binding site. Tyr185 acts as the Proton acceptor in catalysis. Residue Lys189 coordinates NADP(+). The short motif at 279–281 (SRL) is the Peroxisomal targeting signal element.

Belongs to the short-chain dehydrogenases/reductases (SDR) family.

Putative oxidoreductase. This Homo sapiens (Human) protein is Putative dehydrogenase/reductase SDR family member 4-like 1.